The chain runs to 125 residues: Small ribosomal subunit protein eS8 (125 aa).

Belongs to the eukaryotic ribosomal protein eS8 family. Part of the 30S ribosomal subunit.

The protein is Small ribosomal subunit protein eS8 of Methanosarcina barkeri (strain Fusaro / DSM 804).